The sequence spans 315 residues: Ribosomal RNA small subunit methyltransferase H (315 aa).

S-adenosyl-L-methionine is bound by residues 35–37 (GGH), Asp55, Phe80, Asp102, and Gln109.

This sequence belongs to the methyltransferase superfamily. RsmH family.

The protein localises to the cytoplasm. The catalysed reaction is cytidine(1402) in 16S rRNA + S-adenosyl-L-methionine = N(4)-methylcytidine(1402) in 16S rRNA + S-adenosyl-L-homocysteine + H(+). In terms of biological role, specifically methylates the N4 position of cytidine in position 1402 (C1402) of 16S rRNA. In Shewanella pealeana (strain ATCC 700345 / ANG-SQ1), this protein is Ribosomal RNA small subunit methyltransferase H.